A 186-amino-acid polypeptide reads, in one-letter code: MKFFLGSALFLILTFINLVRAEFEFITPAEDSRWARGFTYAVKWKQPTEQFVEIALQYADSNNTLITSSGVIPSNQTYWMVKIDKKWLMKMDNITARVVAVPQNGTASTVYVGPQVLLANTFYWKMVVDVSPAFSVNPIDKKLAIGLSVGLSCCILIVLFLHFATRRERRILKNEKELEMSSYRKH.

Positions 1-21 (MKFFLGSALFLILTFINLVRA) are cleaved as a signal peptide. Residues 22–142 (EFEFITPAED…AFSVNPIDKK (121 aa)) are Extracellular-facing. Residues Asn62, Asn75, Asn93, and Asn104 are each glycosylated (N-linked (GlcNAc...) asparagine). Residues 143–163 (LAIGLSVGLSCCILIVLFLHF) form a helical membrane-spanning segment. Topologically, residues 164–186 (ATRRERRILKNEKELEMSSYRKH) are cytoplasmic.

It localises to the membrane. This is an uncharacterized protein from Schizosaccharomyces pombe (strain 972 / ATCC 24843) (Fission yeast).